The sequence spans 214 residues: Leucyl/phenylalanyl-tRNA--protein transferase (214 aa).

The protein belongs to the L/F-transferase family.

It is found in the cytoplasm. It catalyses the reaction N-terminal L-lysyl-[protein] + L-leucyl-tRNA(Leu) = N-terminal L-leucyl-L-lysyl-[protein] + tRNA(Leu) + H(+). The enzyme catalyses N-terminal L-arginyl-[protein] + L-leucyl-tRNA(Leu) = N-terminal L-leucyl-L-arginyl-[protein] + tRNA(Leu) + H(+). The catalysed reaction is L-phenylalanyl-tRNA(Phe) + an N-terminal L-alpha-aminoacyl-[protein] = an N-terminal L-phenylalanyl-L-alpha-aminoacyl-[protein] + tRNA(Phe). Functions in the N-end rule pathway of protein degradation where it conjugates Leu, Phe and, less efficiently, Met from aminoacyl-tRNAs to the N-termini of proteins containing an N-terminal arginine or lysine. In Cereibacter sphaeroides (strain ATCC 17023 / DSM 158 / JCM 6121 / CCUG 31486 / LMG 2827 / NBRC 12203 / NCIMB 8253 / ATH 2.4.1.) (Rhodobacter sphaeroides), this protein is Leucyl/phenylalanyl-tRNA--protein transferase.